Here is a 121-residue protein sequence, read N- to C-terminus: Small ribosomal subunit protein uS13 (121 aa).

The tract at residues 94–121 is disordered; sequence GLPLRGQRTRTNARTRKGPRKAGVALKK.

This sequence belongs to the universal ribosomal protein uS13 family. In terms of assembly, part of the 30S ribosomal subunit. Forms a loose heterodimer with protein S19. Forms two bridges to the 50S subunit in the 70S ribosome.

Located at the top of the head of the 30S subunit, it contacts several helices of the 16S rRNA. In the 70S ribosome it contacts the 23S rRNA (bridge B1a) and protein L5 of the 50S subunit (bridge B1b), connecting the 2 subunits; these bridges are implicated in subunit movement. Contacts the tRNAs in the A and P-sites. This chain is Small ribosomal subunit protein uS13, found in Ralstonia nicotianae (strain ATCC BAA-1114 / GMI1000) (Ralstonia solanacearum).